We begin with the raw amino-acid sequence, 404 residues long: L-cysteine:1D-myo-inositol 2-amino-2-deoxy-alpha-D-glucopyranoside ligase (404 aa).

Cysteine 35 provides a ligand contact to Zn(2+). L-cysteinyl-5'-AMP-binding positions include 35–38 (CGIT), threonine 50, and 73–75 (NVT). A 'HIGH' region motif is present at residues 37–47 (ITPYDATHLGH). A 'ERGGDP' region motif is present at residues 178–183 (ERGGDP). Tryptophan 219 contacts L-cysteinyl-5'-AMP. Cysteine 223 is a binding site for Zn(2+). 241–243 (GND) is a binding site for L-cysteinyl-5'-AMP. Residue histidine 248 coordinates Zn(2+). Isoleucine 275 is a binding site for L-cysteinyl-5'-AMP. The 'KMSKS' region motif lies at 281-285 (KMSKS).

It belongs to the class-I aminoacyl-tRNA synthetase family. MshC subfamily. In terms of assembly, monomer. Zn(2+) serves as cofactor.

The enzyme catalyses 1D-myo-inositol 2-amino-2-deoxy-alpha-D-glucopyranoside + L-cysteine + ATP = 1D-myo-inositol 2-(L-cysteinylamino)-2-deoxy-alpha-D-glucopyranoside + AMP + diphosphate + H(+). Its function is as follows. Catalyzes the ATP-dependent condensation of GlcN-Ins and L-cysteine to form L-Cys-GlcN-Ins. The polypeptide is L-cysteine:1D-myo-inositol 2-amino-2-deoxy-alpha-D-glucopyranoside ligase (Salinispora tropica (strain ATCC BAA-916 / DSM 44818 / JCM 13857 / NBRC 105044 / CNB-440)).